We begin with the raw amino-acid sequence, 225 residues long: MIRLPFRDGYYEVRPTKIIALAKNYAEHAREMGSEPPEEPVIFLKPPSALIGPNSVIVLPRRSKRVDHEVELAVIIGKRAKNVPAEKAFDYILGYTILLDITARDLQAEARKKGYPWTVSKGFDTFAPIGPRIVDKRELDPSDLEIGLKVNGKVRQLGRTSEMIFKIPELIEYISSIMTLEPGDIIATGTPPGVGPLRHGDKIEAWVEGIGVLEEEVIAEDSILC.

The a divalent metal cation site is built by E69, E71, and D100.

The protein belongs to the FAH family.

This is an uncharacterized protein from Pyrococcus abyssi (strain GE5 / Orsay).